Reading from the N-terminus, the 583-residue chain is Capsid vertex component 2 (583 aa).

The interaction with major capsid protein/MCP stretch occupies residues 1–49 (MANFIWDARILTGDGMEMFPADVKNFIAPPWPIEFWKEPVFTSNRANME).

Belongs to the herpesviridae CVC2 protein family. Heterodimerizes with CVC1. Interacts with major capsid protein/MCP and triplex capsid protein 1/TRX1 at the pentamer vertices. Interacts with the large tegument protein/LTP.

The protein localises to the virion. It localises to the host nucleus. Its function is as follows. Capsid vertex-specific component that plays a role during viral DNA encapsidation, assuring correct genome cleavage and presumably stabilizing capsids that contain full-length viral genomes. Participates in the interaction between the capsid and the tegument through interaction with the large tegument protein/LTP. In Gallus gallus (Chicken), this protein is Capsid vertex component 2.